The sequence spans 140 residues: uncharacterized protein (140 aa).

3 consecutive transmembrane segments (helical) span residues 20–42 (ILYY…YVSG), 88–110 (FVAL…PVLL), and 115–137 (IIYT…GLLQ).

It is found in the cell membrane. This is an uncharacterized protein from Archaeoglobus fulgidus (strain ATCC 49558 / DSM 4304 / JCM 9628 / NBRC 100126 / VC-16).